We begin with the raw amino-acid sequence, 559 residues long: Pentatricopeptide repeat-containing protein At2g42920, chloroplastic (559 aa).

The N-terminal 14 residues, 1–14 (MSPTILSFSGVTVP), are a transit peptide targeting the chloroplast. PPR repeat units follow at residues 88–122 (NPFV…SPSV), 125–159 (QRLT…GLED), 160–190 (DSFI…MIGF), 191–221 (DVVA…MPQR), 222–256 (NGVS…DVKP), 257–291 (DGFT…RFEL), 292–322 (NSIV…APKK), 323–357 (QLSC…GLEP), 358–388 (DSVS…MKEK), and 394–424 (SIKH…MPVE). Positions 429–504 (IWSSLLSACR…EVGCSSIEVD (76 aa)) are type E motif. The tract at residues 505 to 535 (FEVHEFISCGGTHPKSAEIYSLLDILNWDVS) is type E(+) motif.

Belongs to the PPR family. PCMP-E subfamily.

It is found in the plastid. Its subcellular location is the chloroplast. This Arabidopsis thaliana (Mouse-ear cress) protein is Pentatricopeptide repeat-containing protein At2g42920, chloroplastic (PCMP-E75).